Reading from the N-terminus, the 297-residue chain is Protein PecM (297 aa).

The next 10 membrane-spanning stretches (helical) occupy residues 6–26, 38–58, 60–80, 86–106, 116–136, 138–158, 167–187, 203–223, 231–251, and 261–281; these read FAFY…QFLP, ALPA…GWLW, LFVL…FAAY, VVAL…FLLL, VAAV…KAPL, PAGL…LVLT, MTML…ILPV, LAGY…MWFS, VIMS…GFLF, and LVGV…SLFS. EamA domains follow at residues 12–130 and 149–276; these read CVWG…LLIS and MSMA…IVQD.

This sequence belongs to the EamA transporter family.

Its subcellular location is the cell membrane. In terms of biological role, involved in pectinase, cellulase, and blue pigment regulation. The polypeptide is Protein PecM (pecM) (Dickeya dadantii (strain 3937) (Erwinia chrysanthemi (strain 3937))).